Here is a 373-residue protein sequence, read N- to C-terminus: 3 beta-hydroxysteroid dehydrogenase/Delta 5--&gt;4-isomerase type 2 (373 aa).

The active-site Proton acceptor is Tyr155. Residue Lys159 participates in NAD(+) binding. The chain crosses the membrane as a helical span at residues 288–308 (VPLLYWLAFLLETVSFLLSPI).

Belongs to the 3-beta-HSD family. Liver and kidney.

The protein resides in the endoplasmic reticulum membrane. It localises to the mitochondrion membrane. It carries out the reaction a 3beta-hydroxy-Delta(5)-steroid + NAD(+) = a 3-oxo-Delta(5)-steroid + NADH + H(+). It catalyses the reaction a 3-oxo-Delta(5)-steroid = a 3-oxo-Delta(4)-steroid. The catalysed reaction is pregnenolone + NAD(+) = pregn-5-ene-3,20-dione + NADH + H(+). The enzyme catalyses pregn-5-ene-3,20-dione = progesterone. It carries out the reaction 3beta-hydroxyandrost-5-en-17-one + NAD(+) = androst-5-ene-3,17-dione + NADH + H(+). It catalyses the reaction androst-5-ene-3,17-dione = androst-4-ene-3,17-dione. Its pathway is lipid metabolism; steroid biosynthesis. 3-beta-HSD is a bifunctional enzyme, that catalyzes the oxidative conversion of Delta(5)-ene-3-beta-hydroxy steroid, and the oxidative conversion of ketosteroids. The 3-beta-HSD enzymatic system plays a crucial role in the biosynthesis of all classes of hormonal steroids. In Mus musculus (Mouse), this protein is 3 beta-hydroxysteroid dehydrogenase/Delta 5--&gt;4-isomerase type 2.